We begin with the raw amino-acid sequence, 279 residues long: 3-methyl-2-oxobutanoate hydroxymethyltransferase 2 (279 aa).

Residues Asp58 and Asp97 each coordinate Mg(2+). Residues 58 to 59 (DS), Asp97, and Lys126 contribute to the 3-methyl-2-oxobutanoate site. Glu128 contributes to the Mg(2+) binding site. Residue Glu195 is the Proton acceptor of the active site.

The protein belongs to the PanB family. As to quaternary structure, homodecamer; pentamer of dimers. Mg(2+) serves as cofactor.

The protein localises to the cytoplasm. The enzyme catalyses 3-methyl-2-oxobutanoate + (6R)-5,10-methylene-5,6,7,8-tetrahydrofolate + H2O = 2-dehydropantoate + (6S)-5,6,7,8-tetrahydrofolate. The protein operates within cofactor biosynthesis; (R)-pantothenate biosynthesis; (R)-pantoate from 3-methyl-2-oxobutanoate: step 1/2. Functionally, catalyzes the reversible reaction in which hydroxymethyl group from 5,10-methylenetetrahydrofolate is transferred onto alpha-ketoisovalerate to form ketopantoate. The sequence is that of 3-methyl-2-oxobutanoate hydroxymethyltransferase 2 from Methylibium petroleiphilum (strain ATCC BAA-1232 / LMG 22953 / PM1).